Reading from the N-terminus, the 68-residue chain is Small ribosomal subunit protein bS21 (68 aa).

Belongs to the bacterial ribosomal protein bS21 family.

The polypeptide is Small ribosomal subunit protein bS21 (Endomicrobium trichonymphae).